The following is a 203-amino-acid chain: HTH-type transcriptional regulator CymR (203 aa).

In terms of domain architecture, HTH tetR-type spans 13-73 (METQGKLIAA…ATFEWLYEQI (61 aa)). The segment at residues 36–55 (RIADVPGAAGVSRGAQSHHF) is a DNA-binding region (H-T-H motif).

Its function is as follows. Involved in the repression of the cym and cmt operons which are responsible of the p-cymene degradation. This chain is HTH-type transcriptional regulator CymR, found in Pseudomonas putida (Arthrobacter siderocapsulatus).